Consider the following 389-residue polypeptide: 26S proteasome non-ATPase regulatory subunit 6 (389 aa).

Positions 193–361 (DFKQAAELFL…EIVETNRPDS (169 aa)) constitute a PCI domain.

It belongs to the proteasome subunit S10 family. Component of the 19S proteasome regulatory particle complex. The 26S proteasome consists of a 20S core particle (CP) and two 19S regulatory subunits (RP). The regulatory particle is made of a lid composed of 9 subunits including PSMD6, a base containing 6 ATPases and few additional components.

Functionally, component of the 26S proteasome, a multiprotein complex involved in the ATP-dependent degradation of ubiquitinated proteins. This complex plays a key role in the maintenance of protein homeostasis by removing misfolded or damaged proteins, which could impair cellular functions, and by removing proteins whose functions are no longer required. Therefore, the proteasome participates in numerous cellular processes, including cell cycle progression, apoptosis, or DNA damage repair. This Mus musculus (Mouse) protein is 26S proteasome non-ATPase regulatory subunit 6 (Psmd6).